The primary structure comprises 1220 residues: MGDMANNSVVYGGVKNSLKEANHDGDFGITLAAVRALMELRSTDALRKILESYGDVYGICTKLKTSPNEGLRGNPADLERREAVFGKNFIPPKKPKTFLQLVWEALQDVTLIILEIAAIVSLGLSFYQPPEGDNALCGEVSVGEEEGEGETGWIEGAAILLSVVCVVLVTAFNDWSKEKQFRGLQSRIEQEQKFTVIRGGQVIQIPVSDITVGDIAQVKYGDLLPADGILIQGNDLKIDESSLTGESDHVKKSLDKDPLLLSGTHVMEGSGRMVVTAVGVNSQTGIIFTLLGAGGEEEEKKDEKKKEKKNKKQDGAIENRNKAKAQDGEPMEMQPLKSEEGGDGDEKDKKKANLPKKEKSVLQGKLTKLAVQIGKAGLLMSAITVIILVLYFLIDTFWVQKRPWLAECTPIYIQYFVKFFIIGVTVLVVAVPEGLPLPVTISLAYSVNEMMKDNNLVRHLDACETMGNATAICSDKTGTLTMNRMAVVQAYINEKHYKKVPEPEPYPPNILSYLVTGISVNCAYTSKILPPEEEGGLPRIVGNKTECALLGPLLDLKQDYQDVRNEIPEEALYKVYTFQSVRKSMSTVLKNSDGSFRIFSKGASEIILKKCFKILSANGEAKVFRPRDRDDIVKTVIEPMASEGLRTICLAFRDFPAGEPEPEWDNENDIVTGLTCIAVVGIEDPGRPEVADAIKKCQRAGITVEVVTGDNINTARAIATKCGILHPGEDFLCLEGKDFNRRIRNEKGEIEQESIDKIWPKLRVLARSSPTDKHTLVKGIIDSTVSEQRQVVAVTGDGTNDGPALKKADGGFAMGIAGTDVAKEASDIILTDDNFTSIVKAVMWGRNVYDSISKFLQFQLTVNVVAVIVAFTGACITQDSPLKAVQMLWVNLIMDTLASLALATEPPTESLLLGKPYGRNKPLISRTMMKNILGHAFYQLVVVFTLLLAGEKFFDIDSGRNAPLHAPPSEHYTIVFNIFVLMQLFNEINARKIHGERNVFEGIFNNAIFCTIVLGTFVVQIIIVQFAGKPFSCSELSVEQWLWSIFLGMGTLLWGQLISTIPTSRLKFQKEVVHGTQKREIGEEELAEDVEEIVHAERELRRWQILWFRGLNRIQTQIRVVNAFRSSLYEGLEKPESRSSIHNFMTHPEFRIEDSEPHIPLIDDTDAEDDAPTKRNSSPPPSPNKNNNLVDSGIHLTIEMNKSATSSSPGSPLHSLETSL.

N-acetylglycine is present on G2. Over 2 to 105 (GDMANNSVVY…KTFLQLVWEA (104 aa)) the chain is Cytoplasmic. S8 and S17 each carry phosphoserine. The helical transmembrane segment at 106–126 (LQDVTLIILEIAAIVSLGLSF) threads the bilayer. Over 127–154 (YQPPEGDNALCGEVSVGEEEGEGETGWI) the chain is Extracellular. Residues 155 to 175 (EGAAILLSVVCVVLVTAFNDW) traverse the membrane as a helical segment. Topologically, residues 176-366 (SKEKQFRGLQ…KEKSVLQGKL (191 aa)) are cytoplasmic. The disordered stretch occupies residues 297–356 (EEEKKDEKKKEKKNKKQDGAIENRNKAKAQDGEPMEMQPLKSEEGGDGDEKDKKKANLPK). Basic and acidic residues-rich tracts occupy residues 312 to 327 (KQDG…KAQD) and 337 to 356 (KSEE…NLPK). S338 bears the Phosphoserine mark. Residues 367–386 (TKLAVQIGKAGLLMSAITVI) form a helical membrane-spanning segment. Residues 387 to 418 (ILVLYFLIDTFWVQKRPWLAECTPIYIQYFVK) lie on the Extracellular side of the membrane. The chain crosses the membrane as a helical span at residues 419–439 (FFIIGVTVLVVAVPEGLPLPV). Topologically, residues 440-855 (TISLAYSVNE…RNVYDSISKF (416 aa)) are cytoplasmic. Catalysis depends on D475, which acts as the 4-aspartylphosphate intermediate. 3 residues coordinate Mg(2+): D475, T477, and D797. Residues 856 to 876 (LQFQLTVNVVAVIVAFTGACI) traverse the membrane as a helical segment. Residues 877–882 (TQDSPL) lie on the Extracellular side of the membrane. Residues 883–903 (KAVQMLWVNLIMDTLASLALA) form a helical membrane-spanning segment. Topologically, residues 904–927 (TEPPTESLLLGKPYGRNKPLISRT) are cytoplasmic. Residues 928–948 (MMKNILGHAFYQLVVVFTLLL) form a helical membrane-spanning segment. The Extracellular segment spans residues 949-971 (AGEKFFDIDSGRNAPLHAPPSEH). Residues 972-991 (YTIVFNIFVLMQLFNEINAR) form a helical membrane-spanning segment. Residues 992–1005 (KIHGERNVFEGIFN) are Cytoplasmic-facing. The helical transmembrane segment at 1006–1027 (NAIFCTIVLGTFVVQIIIVQFA) threads the bilayer. At 1028–1039 (GKPFSCSELSVE) the chain is on the extracellular side. Residues 1040–1060 (QWLWSIFLGMGTLLWGQLIST) form a helical membrane-spanning segment. Topologically, residues 1061–1220 (IPTSRLKFQK…SPLHSLETSL (160 aa)) are cytoplasmic. The interval 1100–1117 (LRRWQILWFRGLNRIQTQ) is calmodulin-binding subdomain A. Position 1116 is a phosphothreonine; by PKC (T1116). The interval 1118–1220 (IRVVNAFRSS…SPLHSLETSL (103 aa)) is required for basolateral membrane targeting. 2 positions are modified to phosphoserine: S1140 and S1155. Residues 1160-1220 (PLIDDTDAED…SPLHSLETSL (61 aa)) form a disordered region. T1165 is subject to Phosphothreonine. Residue S1177 is modified to Phosphoserine; by PKA. Phosphoserine occurs at positions 1178 and 1182. Over residues 1200 to 1220 (MNKSATSSSPGSPLHSLETSL) the composition is skewed to polar residues.

Belongs to the cation transport ATPase (P-type) (TC 3.A.3) family. Type IIB subfamily. As to quaternary structure, monomer. Dimer. Oligomer. Calmodulin binding. Interacts with PDZD11. Interacts with SLC35G1 and STIM1. Interacts with YWHAE; interacts with the monomeric and dimeric forms of the YWHAE but prefer the monomer form; this interaction inhibits calcium-transporting ATPase activity. Interacts with NPTN; this interaction stabilizes ATP2B1 and increases ATPase activity; this interaction controls T cell calcium homeostasis following T cell activation. Interacts with EPB41; regulates small intestinal calcium absorption through regulation of membrane expression of ATP2B1. Isoform B is ubiquitously expressed and is the most predominant isoform. Isoform C is expressed at much lower levels in all tissues tested, but liver, while isoform A is found only in aorta, brain and stomach.

It localises to the cell membrane. The protein localises to the basolateral cell membrane. It is found in the synapse. Its subcellular location is the presynaptic cell membrane. The protein resides in the cytoplasmic vesicle. It localises to the secretory vesicle. The protein localises to the synaptic vesicle membrane. The enzyme catalyses Ca(2+)(in) + ATP + H2O = Ca(2+)(out) + ADP + phosphate + H(+). In terms of biological role, catalyzes the hydrolysis of ATP coupled with the transport of calcium from the cytoplasm to the extracellular space thereby maintaining intracellular calcium homeostasis. Plays a role in blood pressure regulation through regulation of intracellular calcium concentration and nitric oxide production leading to regulation of vascular smooth muscle cells vasoconstriction. Positively regulates bone mineralization through absorption of calcium from the intestine. Plays dual roles in osteoclast differentiation and survival by regulating RANKL-induced calcium oscillations in preosteoclasts and mediating calcium extrusion in mature osteoclasts. Regulates insulin sensitivity through calcium/calmodulin signaling pathway by regulating AKT1 activation and NOS3 activation in endothelial cells. May play a role in synaptic transmission by modulating calcium and proton dynamics at the synaptic vesicles. The sequence is that of Plasma membrane calcium-transporting ATPase 1 from Oryctolagus cuniculus (Rabbit).